Reading from the N-terminus, the 165-residue chain is Large ribosomal subunit protein uL11 (165 aa).

R67 is modified (N5-methylarginine).

This sequence belongs to the universal ribosomal protein uL11 family. In terms of assembly, component of the large ribosomal subunit (LSU). Mature N.crassa ribosomes consist of a small (40S) and a large (60S) subunit. The 40S small subunit contains 1 molecule of ribosomal RNA (18S rRNA) and at least 32 different proteins. The large 60S subunit contains 3 rRNA molecules (26S, 5.8S and 5S rRNA) and at least 42 different proteins.

Its subcellular location is the cytoplasm. Component of the ribosome, a large ribonucleoprotein complex responsible for the synthesis of proteins in the cell. The small ribosomal subunit (SSU) binds messenger RNAs (mRNAs) and translates the encoded message by selecting cognate aminoacyl-transfer RNA (tRNA) molecules. The large subunit (LSU) contains the ribosomal catalytic site termed the peptidyl transferase center (PTC), which catalyzes the formation of peptide bonds, thereby polymerizing the amino acids delivered by tRNAs into a polypeptide chain. The nascent polypeptides leave the ribosome through a tunnel in the LSU and interact with protein factors that function in enzymatic processing, targeting, and the membrane insertion of nascent chains at the exit of the ribosomal tunnel. This chain is Large ribosomal subunit protein uL11 (rpl-12), found in Neurospora crassa (strain ATCC 24698 / 74-OR23-1A / CBS 708.71 / DSM 1257 / FGSC 987).